A 464-amino-acid chain; its full sequence is Chromosomal replication initiator protein DnaA (464 aa).

A domain I, interacts with DnaA modulators region spans residues 1–82; the sequence is MSLSLWQQCL…LLRFEVGSKP (82 aa). The domain II stretch occupies residues 82–127; sequence PITQVISQTVTASVSSAPAAPAARTAAPSRPSWDNAAAQPELSYRS. The segment covering 98 to 113 has biased composition (low complexity); the sequence is APAAPAARTAAPSRPS. A disordered region spans residues 98–117; it reads APAAPAARTAAPSRPSWDNA. The interval 128-344 is domain III, AAA+ region; sequence NVNPKHTFDN…GALNRVIANA (217 aa). Residues Gly172, Gly174, Lys175, and Thr176 each contribute to the ATP site. A domain IV, binds dsDNA region spans residues 345–464; sequence NFTGRAITID…FSNLIRTLSS (120 aa).

It belongs to the DnaA family. In terms of assembly, oligomerizes as a right-handed, spiral filament on DNA at oriC.

It is found in the cytoplasm. Functionally, plays an important role in the initiation and regulation of chromosomal replication. Binds to the origin of replication; it binds specifically double-stranded DNA at a 9 bp consensus (dnaA box): 5'-TTATC[CA]A[CA]A-3'. DnaA binds to ATP and to acidic phospholipids. DnaA can inhibit its own gene expression as well as that of other genes. In terms of biological role, plays an essential role in the initiation and regulation of chromosomal replication. ATP-DnaA binds to the origin of replication (oriC) to initiate formation of the DNA replication initiation complex once per cell cycle. Binds the DnaA box (a 9 base pair repeat at the origin) and separates the double-stranded (ds)DNA. Forms a right-handed helical filament on oriC DNA; dsDNA binds to the exterior of the filament while single-stranded (ss)DNA is stabiized in the filament's interior. The ATP-DnaA-oriC complex binds and stabilizes one strand of the AT-rich DNA unwinding element (DUE), permitting loading of DNA polymerase. After initiation quickly degrades to an ADP-DnaA complex that is not apt for DNA replication. Binds acidic phospholipids. This Serratia marcescens protein is Chromosomal replication initiator protein DnaA.